Consider the following 144-residue polypeptide: UPF0292 protein MA_4098 (144 aa).

The Toprim domain maps to 28–109 (GAVIIVEGKR…KPELQIRNKL (82 aa)). Positions 34, 78, and 80 each coordinate Mg(2+).

The protein belongs to the UPF0292 family. Mg(2+) serves as cofactor.

In Methanosarcina acetivorans (strain ATCC 35395 / DSM 2834 / JCM 12185 / C2A), this protein is UPF0292 protein MA_4098.